A 1224-amino-acid polypeptide reads, in one-letter code: Protein MSN5 (1224 aa).

The tract at residues 1200 to 1224 (NKENGDMLDDPNIEDGAVGNLFDDN) is disordered.

Interacts with CEX1.

This Saccharomyces cerevisiae (strain ATCC 204508 / S288c) (Baker's yeast) protein is Protein MSN5 (MSN5).